A 644-amino-acid polypeptide reads, in one-letter code: 3D-(3,5/4)-trihydroxycyclohexane-1,2-dione hydrolase (644 aa).

Glu65 contacts thiamine diphosphate. The interval 442–522 (SLPGDLQRMW…INVLLFDNSG (81 aa)) is thiamine pyrophosphate binding. The Mg(2+) site is built by Asp493 and Asn520.

This sequence belongs to the TPP enzyme family. The cofactor is Mg(2+). Thiamine diphosphate serves as cofactor.

It carries out the reaction 3D-3,5/4-trihydroxycyclohexane-1,2-dione + H2O = 5-deoxy-D-glucuronate + H(+). The protein operates within polyol metabolism; myo-inositol degradation into acetyl-CoA; acetyl-CoA from myo-inositol: step 3/7. In terms of biological role, involved in the cleavage of the C1-C2 bond of 3D-(3,5/4)-trihydroxycyclohexane-1,2-dione (THcHDO) to yield 5-deoxy-glucuronate (5DG). This chain is 3D-(3,5/4)-trihydroxycyclohexane-1,2-dione hydrolase, found in Bacillus cereus (strain AH820).